A 168-amino-acid polypeptide reads, in one-letter code: MKRLKAYLKDGINVAAVMCLGDTISQFFFDKKSLDEWDAGRTLRFGIVGLVFVGPTLRRWYHFLESRVPKTYSPMRRGVTKMLVDQTLFAPPFTMAMSFLVPLSNGEPIDRIRQRILDSYLSILVRNYMLWPAAQMLNFRFVPLGYQVLYAQFIALVWNCYLSMILNS.

The next 4 membrane-spanning stretches (helical) occupy residues 12–29, 41–61, 82–101, and 144–166; these read INVAAVMCLGDTISQFFF, RTLRFGIVGLVFVGPTLRRWY, MLVDQTLFAPPFTMAMSFLV, and LGYQVLYAQFIALVWNCYLSMIL.

Belongs to the peroxisomal membrane protein PXMP2/4 family. As to quaternary structure, part of a larger complex that may be a homohexamer.

Its subcellular location is the mitochondrion inner membrane. Non-selective channel that modulates the membrane potential under normal conditions and oxidative stress, and is involved in mitochondrial homeostasis. Can translocate uridine, but not orotate, across a lipid membrane. Involved in maintenance of mitochondrial ultrastructure. May be involved in mitochondrial DNA (mtDNA) maintenance but does not appear to be directly involved in mitochondrial deoxynucleoside triphosphate (dNTP) pool homeostasis. May be involved in the regulation of reactive oxygen species metabolism and the control of oxidative phosphorylation. This Drosophila melanogaster (Fruit fly) protein is Mitochondrial inner membrane protein Mpv17.